A 674-amino-acid polypeptide reads, in one-letter code: MTDIIRAAEAIAQLRREIERHTHLYYVEAKPELSDFEFDQLLDQLITLERQFPQLLTPDSPSQRVGGAITREFPAVQHREPMLSLSNSYSITEVEEFYNRVRKLLALEGVVEQEMVAELKFDGVAISLIYQDGILVRGATRGDGRQGDDITANLKTVATIPLRLEETLVAALQGEERAIEVRGEVFMRKEDFERLNESRPDEDRFANPRNATAGSLKLQDSGEVARRSMSFVAYYLKGLKDESTPHIHRLELLARLGFFTGDHYRLCNTLEEINTYIAEWAEKRWQLPYETDGVVLKLNDVPFREKLGATAKSPRWAIAYKYPAQQARSVLQNVLFQVGRLGTITPVAELEPVLLAGSTVSRSTLHNFDEIERLGLMLRDRVIIEKSGEVIPKVVRTLFEERPADAMPILPPTHCPSCGAPLVRPENEVSYSCPNEEECPAQIKGRLLHFASRNAMDIQTLGDALVEQLVAKGLVKDPGDLYFLQEPQLEKLERMGPKSAQNILRALEKSREKSYERLLYALGIRHVGRATARELSQACPSIDLLREASEEQLATIPDIGPVVARSIIDYFAKPSWPHLLEKLRTAALQLSASEPKEQVNRNFEGVTVLFTGSLERYDRQKASELVLERGGRVVGSVSKKTGMVVAGQDPGSKLQKANKLGVRVVSEDEFEAML.

NAD(+) is bound by residues 35-39 (DFEFD), 84-85 (SL), and Glu-118. Lys-120 (N6-AMP-lysine intermediate) is an active-site residue. NAD(+) contacts are provided by Arg-141, Glu-184, Lys-297, and Lys-321. 4 residues coordinate Zn(2+): Cys-415, Cys-418, Cys-433, and Cys-439. A BRCT domain is found at 598–674 (QVNRNFEGVT…VSEDEFEAML (77 aa)).

Belongs to the NAD-dependent DNA ligase family. LigA subfamily. Requires Mg(2+) as cofactor. The cofactor is Mn(2+).

The enzyme catalyses NAD(+) + (deoxyribonucleotide)n-3'-hydroxyl + 5'-phospho-(deoxyribonucleotide)m = (deoxyribonucleotide)n+m + AMP + beta-nicotinamide D-nucleotide.. DNA ligase that catalyzes the formation of phosphodiester linkages between 5'-phosphoryl and 3'-hydroxyl groups in double-stranded DNA using NAD as a coenzyme and as the energy source for the reaction. It is essential for DNA replication and repair of damaged DNA. In Pelodictyon phaeoclathratiforme (strain DSM 5477 / BU-1), this protein is DNA ligase.